Reading from the N-terminus, the 508-residue chain is Phenylalanine--tRNA ligase alpha subunit (508 aa).

A2 carries the N-acetylalanine modification. Phosphoserine occurs at positions 193 and 301. K311 bears the N6-acetyllysine mark. L-phenylalanine-binding positions include T329, 372-374 (QIE), and Y412. Residue E414 coordinates Mg(2+). Residue F438 coordinates L-phenylalanine.

It belongs to the class-II aminoacyl-tRNA synthetase family. Phe-tRNA synthetase alpha subunit type 2 subfamily. Heterotetramer; dimer of two heterodimers formed by FARSA and FARSB. Mg(2+) is required as a cofactor.

It is found in the cytoplasm. The enzyme catalyses tRNA(Phe) + L-phenylalanine + ATP = L-phenylalanyl-tRNA(Phe) + AMP + diphosphate + H(+). The polypeptide is Phenylalanine--tRNA ligase alpha subunit (Farsa) (Rattus norvegicus (Rat)).